The following is a 361-amino-acid chain: Phosphoserine aminotransferase (361 aa).

Arginine 42 contacts L-glutamate. Pyridoxal 5'-phosphate is bound by residues 76–77 (AR), tryptophan 102, threonine 153, aspartate 173, and glutamine 196. An N6-(pyridoxal phosphate)lysine modification is found at lysine 197. Position 238 to 239 (238 to 239 (NT)) interacts with pyridoxal 5'-phosphate.

This sequence belongs to the class-V pyridoxal-phosphate-dependent aminotransferase family. SerC subfamily. As to quaternary structure, homodimer. Requires pyridoxal 5'-phosphate as cofactor.

The protein resides in the cytoplasm. The enzyme catalyses O-phospho-L-serine + 2-oxoglutarate = 3-phosphooxypyruvate + L-glutamate. The catalysed reaction is 4-(phosphooxy)-L-threonine + 2-oxoglutarate = (R)-3-hydroxy-2-oxo-4-phosphooxybutanoate + L-glutamate. The protein operates within amino-acid biosynthesis; L-serine biosynthesis; L-serine from 3-phospho-D-glycerate: step 2/3. It participates in cofactor biosynthesis; pyridoxine 5'-phosphate biosynthesis; pyridoxine 5'-phosphate from D-erythrose 4-phosphate: step 3/5. Functionally, catalyzes the reversible conversion of 3-phosphohydroxypyruvate to phosphoserine and of 3-hydroxy-2-oxo-4-phosphonooxybutanoate to phosphohydroxythreonine. The polypeptide is Phosphoserine aminotransferase (Yersinia pestis (strain Pestoides F)).